Here is a 369-residue protein sequence, read N- to C-terminus: uncharacterized protein (369 aa).

Belongs to the myo-inositol 1-phosphate synthase family.

This is an uncharacterized protein from Mycobacterium leprae (strain TN).